The chain runs to 141 residues: HTH-type transcriptional repressor NsrR (141 aa).

The HTH rrf2-type domain occupies 2-129; the sequence is QLTSFTDYAL…DDCSIAELLD (128 aa). A DNA-binding region (H-T-H motif) is located at residues 28 to 51; it reads ITDVTELFGVSRNHMVKVINRLGQ. Cys-91, Cys-96, and Cys-102 together coordinate [2Fe-2S] cluster.

Requires [2Fe-2S] cluster as cofactor.

Its function is as follows. Nitric oxide-sensitive repressor of genes involved in protecting the cell against nitrosative stress. May require iron for activity. The protein is HTH-type transcriptional repressor NsrR of Vibrio vulnificus (strain CMCP6).